The primary structure comprises 64 residues: Cytotoxin homolog S4C8 (64 aa).

4 disulfides stabilise this stretch: Cys-3-Cys-22, Cys-15-Cys-40, Cys-44-Cys-56, and Cys-57-Cys-62.

This sequence belongs to the three-finger toxin family. Short-chain subfamily. Orphan group XIII sub-subfamily. In terms of tissue distribution, expressed by the venom gland.

The protein resides in the secreted. The polypeptide is Cytotoxin homolog S4C8 (Aspidelaps scutatus (Shield-nose snake)).